Reading from the N-terminus, the 135-residue chain is Protein PsiE homolog (135 aa).

The next 4 helical transmembrane spans lie at 20-40 (VGLI…TFHL), 54-74 (YMLI…ALIV), 82-102 (HFPL…LIIV), and 107-127 (PIDT…LYLA).

It belongs to the PsiE family.

It is found in the cell inner membrane. The sequence is that of Protein PsiE homolog from Yersinia enterocolitica serotype O:8 / biotype 1B (strain NCTC 13174 / 8081).